A 281-amino-acid polypeptide reads, in one-letter code: Nucleotide-binding protein Patl_0571 (281 aa).

8 to 15 (GRSGSGKS) contributes to the ATP binding site. 56–59 (DVRN) is a GTP binding site.

This sequence belongs to the RapZ-like family.

Its function is as follows. Displays ATPase and GTPase activities. The polypeptide is Nucleotide-binding protein Patl_0571 (Pseudoalteromonas atlantica (strain T6c / ATCC BAA-1087)).